The sequence spans 146 residues: Protein LDOC1 (146 aa).

This sequence belongs to the LDOC1 family. As to quaternary structure, interacts with NOD2. As to expression, ubiquitously expressed with high levels in brain ant thyroid and low expression in placenta, liver and leukocytes. Expressed as well in six of the seven human breast cancer cell lines examined.

Its subcellular location is the nucleus. In terms of biological role, may have an important role in the development and/or progression of some cancers. This is Protein LDOC1 (LDOC1) from Homo sapiens (Human).